Here is a 1578-residue protein sequence, read N- to C-terminus: FH1/FH2 domain-containing protein 3 (1578 aa).

Residues 18-405 (NSTNFPEPSR…DLCEKDEEEE (388 aa)) form the GBD/FH3 domain. Disordered regions lie at residues 324-518 (HEDG…DKLP), 535-824 (SPLL…GVNG), 915-942 (VGRG…KTES), 979-1013 (LGHR…VPPP), 1418-1462 (QQKQ…YAED), 1490-1514 (RTRS…PSVT), and 1528-1565 (SATQ…PEEA). Ser345 and Ser376 each carry phosphoserine. A compositionally biased stretch (polar residues) spans 368-383 (IQNIKSPLSAPTSPCS). Positions 399–425 (EKDEEEEEEEEQPITEPNSEEEREDDA) are enriched in acidic residues. Residue Thr413 is modified to Phosphothreonine. Low complexity predominate over residues 434-446 (ASSASGQSSPGKD). Polar residues predominate over residues 453–473 (ALHTTSSPTSQGRWLSASTAA). The segment covering 553–583 (SNFSSNSFQSSRPSPGPSGSPSYASSFSSPQ) has biased composition (low complexity). Positions 584–598 (DTRSSPSGLLTSSFR) are enriched in polar residues. Positions 597 to 645 (FRQHQESLAAERERRRQEREERLQRIEREERNKFNREYLDKREEQRQAR) form a coiled coil. Residues 599-651 (QHQESLAAERERRRQEREERLQRIEREERNKFNREYLDKREEQRQARGERYKY) are compositionally biased toward basic and acidic residues. Composition is skewed to low complexity over residues 675–684 (DLSLDLSLPA) and 692–701 (SSQSPSADSQ). The segment covering 751 to 761 (SQEEPVLELEP) has biased composition (acidic residues). A compositionally biased stretch (basic and acidic residues) spans 762–782 (EERASLSEKERQNEEVNERDN). Residues 784–793 (SASSISSSSS) show a composition bias toward low complexity. Positions 795 to 809 (LEREEKEDKLSEDRA) are enriched in basic and acidic residues. Ser921 carries the post-translational modification Phosphoserine. The residue at position 933 (Thr933) is a Phosphothreonine. Positions 985–1013 (PGPPPPPPPTFLGLPPPPPPPLLDSVPPP) are enriched in pro residues. An FH1 domain is found at 985–1016 (PGPPPPPPPTFLGLPPPPPPPLLDSVPPPPVP). One can recognise an FH2 domain in the interval 1039 to 1435 (GQPAFTKKKK…HRERNKTRGK (397 aa)). The segment covering 1420 to 1434 (KQKRANHRERNKTRG) has biased composition (basic residues). A compositionally biased stretch (low complexity) spans 1444 to 1456 (SGSSPAAPSQPQG). Positions 1515-1547 (DDAADEIMDRIVKSATQVPSQRVVPRERKRSRA) constitute a DAD domain. Over residues 1541–1556 (ERKRSRANRKSLRRTL) the composition is skewed to basic residues.

The protein belongs to the formin homology family. As to quaternary structure, interacts with nestin/NES-based interfilament (IF). Interacts with SQSTM1. Expressed in the heart, including left ventricle, kidney, brain and skeletal muscle, including soleus and tibialis anterior (at protein level).

It localises to the cytoplasm. It is found in the cytoskeleton. The protein localises to the myofibril. Its subcellular location is the sarcomere. The protein resides in the z line. Functionally, may play a role in actin filament polymerization in cardiomyocytes. Actin-organizing protein that may cause stress fiber formation together with cell elongation. In Mus musculus (Mouse), this protein is FH1/FH2 domain-containing protein 3 (Fhod3).